A 150-amino-acid chain; its full sequence is Deoxyuridine 5'-triphosphate nucleotidohydrolase (150 aa).

Residues 69 to 71 (RSG), Asn82, 86 to 88 (LID), and Lys96 each bind substrate.

This sequence belongs to the dUTPase family. Requires Mg(2+) as cofactor.

It carries out the reaction dUTP + H2O = dUMP + diphosphate + H(+). The protein operates within pyrimidine metabolism; dUMP biosynthesis; dUMP from dCTP (dUTP route): step 2/2. Its function is as follows. This enzyme is involved in nucleotide metabolism: it produces dUMP, the immediate precursor of thymidine nucleotides and it decreases the intracellular concentration of dUTP so that uracil cannot be incorporated into DNA. In Neisseria meningitidis serogroup A / serotype 4A (strain DSM 15465 / Z2491), this protein is Deoxyuridine 5'-triphosphate nucleotidohydrolase.